The primary structure comprises 592 residues: Endoribonuclease Arlr (592 aa).

The signal sequence occupies residues 1-24 (MRCLALSAVFLCLTLAGHFHLSDA). Residues 83–329 (PTAANKPPPL…FQSSGNSVAT (247 aa)) form a disordered region. Polar residues predominate over residues 109–120 (PGSSPFGASQNP). 2 stretches are compositionally biased toward low complexity: residues 134–144 (PSHPSQPSQPS) and 188–209 (GISS…TGKT). Pro residues-rich tracts occupy residues 234 to 249 (LPAP…PTPG) and 258 to 267 (LPTPQHPVHP). Residues 268–294 (PTKATSAATPTPTPTPSFSSSVTPTPA) are compositionally biased toward low complexity. The 264-residue stretch at 329 to 592 (TDDEIRQLTE…NLIGSAYPEI (264 aa)) folds into the EndoU domain. Active-site residues include histidine 473, histidine 488, and lysine 531.

This sequence belongs to the ENDOU family. In terms of assembly, monomer. It depends on Mn(2+) as a cofactor. Predominantly expressed in head. Expressed in fat body cells.

Its subcellular location is the endoplasmic reticulum lumen. The protein localises to the secreted. It carries out the reaction a ribonucleotidyl-ribonucleotide-RNA + H2O = a 3'-end 3'-phospho-ribonucleotide-RNA + a 5'-end dephospho-ribonucleoside-RNA + H(+). In terms of biological role, endoribonuclease that cleaves single-stranded RNAs; unlike its paralog EndoU it does not appear to preferentially cleave at uridylates and releases linear products instead of products that have 2'-3'-cyclic phosphate termini. Preferentially cleaves single stranded RNA at sites with AU, UC and poly-U sites cleaved less efficiently. Targets mRNAs encoding proteins involved in lipid metabolism, particularly those involved in lipolysis, to regulate their expression. The polypeptide is Endoribonuclease Arlr (Drosophila melanogaster (Fruit fly)).